A 267-amino-acid polypeptide reads, in one-letter code: Translation initiation factor 2 subunit alpha (267 aa).

Residues 12–83 (GEIVMATVER…KRKYANLSLR (72 aa)) enclose the S1 motif domain.

The protein belongs to the eIF-2-alpha family. As to quaternary structure, heterotrimer composed of an alpha, a beta and a gamma chain.

Functionally, eIF-2 functions in the early steps of protein synthesis by forming a ternary complex with GTP and initiator tRNA. This is Translation initiation factor 2 subunit alpha from Methanopyrus kandleri (strain AV19 / DSM 6324 / JCM 9639 / NBRC 100938).